Consider the following 474-residue polypeptide: Ubiquinol-cytochrome-c reductase complex core protein 2, mitochondrial (474 aa).

The transit peptide at 1–42 (MKSVVRSKGTQALFRRFSSALGDSINPNQVGVGDNVIRVNGR) directs the protein to the mitochondrion.

It belongs to the peptidase M16 family. UQCRC2/QCR2 subfamily. Component of the ubiquinol-cytochrome c oxidoreductase (cytochrome b-c1 complex, complex III, CIII), a multisubunit enzyme composed of 3 respiratory subunits cytochrome b, cytochrome c1 and Rieske protein, 2 core protein subunits, and additional low-molecular weight protein subunits. The complex exists as an obligatory dimer and forms supercomplexes (SCs) in the inner mitochondrial membrane with cytochrome c oxidase (complex IV, CIV).

The protein localises to the mitochondrion inner membrane. Component of the ubiquinol-cytochrome c oxidoreductase, a multisubunit transmembrane complex that is part of the mitochondrial electron transport chain which drives oxidative phosphorylation. The respiratory chain contains 3 multisubunit complexes succinate dehydrogenase (complex II, CII), ubiquinol-cytochrome c oxidoreductase (cytochrome b-c1 complex, complex III, CIII) and cytochrome c oxidase (complex IV, CIV), that cooperate to transfer electrons derived from NADH and succinate to molecular oxygen, creating an electrochemical gradient over the inner membrane that drives transmembrane transport and the ATP synthase. The cytochrome b-c1 complex catalyzes electron transfer from ubiquinol to cytochrome c, linking this redox reaction to translocation of protons across the mitochondrial inner membrane, with protons being carried across the membrane as hydrogens on the quinol. In the process called Q cycle, 2 protons are consumed from the matrix, 4 protons are released into the intermembrane space and 2 electrons are passed to cytochrome c. This Euglena gracilis protein is Ubiquinol-cytochrome-c reductase complex core protein 2, mitochondrial.